The sequence spans 431 residues: 5-methylthioadenosine/S-adenosylhomocysteine deaminase (431 aa).

Residues His63 and His65 each contribute to the Zn(2+) site. 3 residues coordinate substrate: Glu92, Arg144, and His184. His211 contacts Zn(2+). Substrate contacts are provided by Glu214 and Asp299. Residue Asp299 coordinates Zn(2+).

It belongs to the metallo-dependent hydrolases superfamily. MTA/SAH deaminase family. Zn(2+) serves as cofactor.

The enzyme catalyses S-adenosyl-L-homocysteine + H2O + H(+) = S-inosyl-L-homocysteine + NH4(+). The catalysed reaction is S-methyl-5'-thioadenosine + H2O + H(+) = S-methyl-5'-thioinosine + NH4(+). Catalyzes the deamination of 5-methylthioadenosine and S-adenosyl-L-homocysteine into 5-methylthioinosine and S-inosyl-L-homocysteine, respectively. Is also able to deaminate adenosine. The polypeptide is 5-methylthioadenosine/S-adenosylhomocysteine deaminase (Thermoanaerobacter pseudethanolicus (strain ATCC 33223 / 39E) (Clostridium thermohydrosulfuricum)).